Here is a 369-residue protein sequence, read N- to C-terminus: Deoxyhypusine synthase (369 aa).

Ser78 is subject to Phosphoserine. NAD(+)-binding positions include 105–109 (SNLIS), 131–133 (TAG), Glu137, and Asp238. Residue 136–137 (EE) participates in spermidine binding. Asp243 provides a ligand contact to spermidine. Residue Gly283 coordinates NAD(+). Residue His288 participates in spermidine binding. 308 to 309 (TA) lines the NAD(+) pocket. Residues 314–316 (GSD) and 323–329 (EAVSWGK) each bind spermidine. Lys329 functions as the Nucleophile in the catalytic mechanism. 342–343 (DA) contacts NAD(+).

The protein belongs to the deoxyhypusine synthase family. As to quaternary structure, homotetramer formed by a dimer of dimers. Requires NAD(+) as cofactor.

The enzyme catalyses [eIF5A protein]-L-lysine + spermidine = [eIF5A protein]-deoxyhypusine + propane-1,3-diamine. Its pathway is protein modification; eIF5A hypusination. In terms of biological role, catalyzes the NAD-dependent oxidative cleavage of spermidine and the subsequent transfer of the butylamine moiety of spermidine to the epsilon-amino group of a critical lysine residue of the eIF-5A precursor protein to form the intermediate deoxyhypusine residue. This is the first step of the post-translational modification of that lysine into an unusual amino acid residue named hypusine. Hypusination is unique to mature eIF-5A factor and is essential for its function. The sequence is that of Deoxyhypusine synthase (DHPS) from Homo sapiens (Human).